Consider the following 467-residue polypeptide: 3-isopropylmalate dehydratase large subunit (467 aa).

Positions 348, 409, and 412 each coordinate [4Fe-4S] cluster.

Belongs to the aconitase/IPM isomerase family. LeuC type 1 subfamily. Heterodimer of LeuC and LeuD. The cofactor is [4Fe-4S] cluster.

The catalysed reaction is (2R,3S)-3-isopropylmalate = (2S)-2-isopropylmalate. It participates in amino-acid biosynthesis; L-leucine biosynthesis; L-leucine from 3-methyl-2-oxobutanoate: step 2/4. Catalyzes the isomerization between 2-isopropylmalate and 3-isopropylmalate, via the formation of 2-isopropylmaleate. In Magnetococcus marinus (strain ATCC BAA-1437 / JCM 17883 / MC-1), this protein is 3-isopropylmalate dehydratase large subunit.